Consider the following 4351-residue polypeptide: MTLVLLGVAMVLLHRAACEKPLEETITPLTWRFTHSLYNATIYENSAPKTYVESPVKMGMYLAEPHWVVKYRIISGDAAGVFKTEEHVVGNFCFLRIRTKSSNTALLNREVRDSYTLVVQASDKSLEFEALTQVVVHILDQNDLKPLFSPPSYRFTISEDRPLKSPICKVTATDADLGQNAEFYYAFNARSEVFAIHPTSGVVTVAGKLNVTWRGKYELQVLAVDRMRKISEGNGFGNLAPLVIYVEPVHRKPPVITLVVLNPPEGDEGDIYATVTVDTNGSGAEVDSLEVVGGDPGKYFKVLKSYAQGNEFNLVAVRDINWAEHLHGFNISLQTHSRSRFPSRSIIRAFHLPPYTLANLRFEKAVYRVKLSEFSPPGSRVALVRVTTALPTLRYALKPSSGSTVFKLNARTGLITTTKPVDFHEQNQYQLHVKTSLGQATTTVIIDIVDCNNHAPVFNRSSYEGTLDENIPPGTSVLTVTATDQDHGDNGHITYSIAGPKAVPFSIDPYLGVISTTKSMDYELMKRIYTFRVRASDWGSPFRQEKEVSVSLRLKNLNDNQPMFEEVNCTVSLRQDAPVGKSIMAVSAIDMDELQNLKYEIVSGNEQDYFHLNHFSGVISLKRSFMNLTAVRPTVYSLKITASDGKNYASPTTLKVTVVKDPRSEVPVQCDKTGVLTHITKTILQSAGLQGQEMGEEDFTSLGNYQINHHAPQFEDHFPQSIDILEQVPVNTPLAHLAATDPDPGFHGRLVYVIADGNEEGCFDIELETGLLTVAAALDYETTSFYVLNVTVYDLGTPPKSSWKLLTVTVKDWNDKPPRFPPGGYQLTISEDTEVGTTVAELKTRDTDSEDNGRVRYTLLTPTEKFSLHPLTGELVVTGQLDRESEPQYILKAEARDQPTKGHQLFSVTDVIVTLEDINDNPPQCITEHSSLKVPEDMPLGTVLTFLDASDPDLGPAGEVKYILVDDVHGTFRVDPMTGALSLEKELDFERRAGYNLSFWASDSGRPLARRTLCHVEVLVMDVNENLHSPHFSSFVYQGQVQENSPAGTQVMVVTAQDDDSGLDGELQYFLRAGTGLEAFSINQDTGMLETLAPLDREFTPYYWLTVLAVDRGSVPLSAVTEVYIEVTDINDNIPSMSRPVFYPSVKEDAPLGTSVLQLEAWDPDFSSQGKLTFNLTSGNHMGHFIVHPFTGLLSTAKQLDRENKDEYVLEVTVQDNGDPPLRSTSRVVVCVLDVNDNSPMFSHKLFNVRLSERLSPLSPEPVYRLVASDPDEGLNGSITYSIEESDEESFRIDPVTGVVSSSSTFAAGEYNILTIKATDSGQPALSTSVRLHIEWIPQPRPSSIPLSFDESHYSFAVMETDPVNHMLGVISVEGRPGLFWFHISDGDKDMDFDIEKTTGSIVIARPLDTRRKSSYNLTVEVTDGFHTIATQVHILMIANINHHRPQFLQDHYDIRVPQDTLPGVELLRVQATDQDHGKGLIYTIHSSRDPGSANLFQLDPSSGVLVTVGTLDLHSGPSQHILTVMVRDQEMPIKRNFVWVTIHVEDGNLHSPHFTQPRYEANVPDTTTPGTELLQVRAVDADRGANAEVHYSFLKGNSEGFFNIDSLLGIITVAQRLDHVHLNRHALTVKAEDQGSPQRHDLAMVVVHVHPSDSSAPIFSKDEYFIEIPESVPIGSPILLISAASSSDVTYELREGNKNSVFSMNSYSGLISTQKRLDHEKVSSYQLKIRGSNMAGVFTEVVALVYIIDENDNAPAFLKSTFVGHISEAAPLHSLILGEDNSPLVIRASDSDQEANSLLVYKILEPEALKFFKIDPSMGTLTITSELDYETTPLFQFSIYVHDQGTPILFAPRSARVIIHVRDVNDSPPRFSEQIYEVAVVEPIHPGMELLTVQAEDNDSKVTYSIKTSNTDEAVTIHPITGQISVVNPAALRLFPKLNIRAFDGLYQDTAVVKISLTQALDKSLQFDQDIYRARVTENTPHSNVLVILGVHGNHLNDTLSYFLLNGTDLFHMVKSAGVLQTRGVTFDREQQDTHEVAVEVRDNRVPRRVAQALVRVSVEDVNDNIPEFQHLPYYTVIQDGTEPGDVLFQVSATDKDLGANGTVTYGFAEDYAYFRIDPYVGDISLKKPFDYQALNKYHLRVTARDAGTPPLQTEVEVHVTVRNKSNPLFQSPYYKVKVPENITLYTPILHTQARSPEGLRLIYNIVEEEPLMLFTTDFKTGVLTVTGPLDYESKNKHVFTVRATDTALGSFSEATVEVLVEDINDNPPTFSQLVYSTSVSEGSPAQTPVIQLLASDQDSGQNQDVSYQIVEDGSDVSKFFRINGSTGEMFTIQELDYEAHQHFRVKVRATDRGDPPLTGETLVVVNVSDINDNPPEFREPQYEANVSELATCGHLVLKVQALDPDIGDTSRLEYLILSGNQDRHFSINSTSGIISMFNLCKKQLDSSYNLRVGASDGVFQATVPVYINTTNANKYSPEFQQNVYEAELAENAKVGTKVIELLAIDKDSGPYGTVDYTIINKLAGERFFINPSGQITTLQKLDRENSTERVIAIKIMARDGGGKVAFCTVKIILTDENDNAPQFKASGYTVSIPSNVSRDSPIIQVLAYDADEGRNADVTYSVDSTEDLAEEIIEVNPTTGVVKVKESLVGLENKAVDFNIKAQDGGPPHWDSLVPVRLQVVPNEIPLPKFSEPLYTFSASEDLPEGSEIGSVKAVAAQDPIIYSLVQGTTPESNSDDVFSLDQDTGVLKVKKAMDHESTKWYQIDLMAHCPHEDTDLVSLVSVNIQVEDVNDNRPVFEADPYKAFLTENMPGGTTVIQVTANDQDTGSDGQVSYRLSVEPGSNIHQLFAVDSESGWITTLQELDCETQQTYRFYVVAFDHGQTIQLSSQALVEVSITDENDNPPRFASEDYRGSVVENNEPGELVATLKTLDADISEQNRQVTCYITEGDPLGQFSISQVGDEWRITSRKTLDREHIAKYLLRITASDGKFQASVPVEVFVLDINDNSPQCSQLLYTGKVREDVTPGHFILKVSAIDVDMDTNAQITYSLHGPGAQEFKLDPHTGELTTLSVLDRERKDVYNLVAKATDGGGQSCQAEVTLHIEDVNDNAPRFFPSHCAVAVFDNTTVKTPVAVVFARDPDQGVNAQVVYSLTDSADGQFSIDATSGVIRLEKPLQVRSSSAVELTVRASDLGTPIPLSTLGTVTVSIVGLEDYLPIFLNSEHSTQVPEDALIDMEVLYLATLTRPGSEKTGYHITGGNEQGKFRLDAHTGILYVNGSLDFETNPKYFLSIECSRKSSSSLSDVTTIVINVTDVNEHHPRFTHDLYTVRVLENAIVGDVILTVSASDDDGPVNSVITYSLVGGNQLGHFTIDPKKGKLQVAKALDWEQTPSYSLRIRATDSGQPPLHEDTEVAVEVVDVNDNPPRFFQLNYSTAVQENSPIGIKVLQLILDDPDSPQNGPPYFFRITEGNTGSVFRVTPDGWLVTAGSLSRRAQEWYQLHIEVSDSGLPPLSSSTLVRVHITEQSRYPPSTLPLEIFITKGEEEFQGGMVGKIHATDRDPQDTLTYSLDREGSLGKYFTVGASDGKIIASQGLPRGRYLFNVTVSDGTFTTTTGVHVHVWHMGQEAPQQAVWLGFHQLTPEELVSDHWRNLQRFLSNILDIKRANIHLASLQPAEVTAGVDVLLAFEGHSGTSYDLQELASAIAHSAKEMEHSVGIQMRSALPVVPCQGPSCQDQTCQETVSLEPRVGPSYSTARLSILTPRHHLGKNCSCNGTTWRFSGQSYMRYRPLEAQNWQIHFYLKTLQPWALLMFTNETASISLKLANGFLHLEYRCPGGFYGNLSSHRPVNDGQWHSMLLEERDTSVHLLVDITDNTSLVIPEECQGLRTERHLLLGGLVPSNPSSNVSLGFEGCLDAVVVNSERLELLGHRKKMAGYLETWALSQCCWPGTTCSQNPCLNGGSCSPALGSGYLCRCPPLFSGRNCELGRENCTSAPCQEGGTCVSSPEGTSCSCPHPYTGDRCEMEARGCSGGHCLITPEIKRGDWGQQEFLVIIVALPLLIIATVGLLLYCRRCKSHKPVAMEDPDLLARSIGVDTQASPAIELDPLNAGSCNDLNQLEPSKTSVPNELVTFGPSSKQRPMVCSVPPRLPPAVVSSHPGHEPIIKRTWSGEELVYPSGAAVWPPTYSRKEHWEYPHPEAMQGPLPPSPRRHVSPAVMPDPAGLYGGFPFPLELENKRAPLPPRYSNQNLEDLIPPRPPSPREHLLAPCLNEYTAISYYHSQFRQGGGGPCLAEGGYKGVSMRLSRAGPSYADCEVNGGPAPGRSQPRAPPNYEGSDMVESDYGSCEEVMF.

A signal peptide spans 1-18 (MTLVLLGVAMVLLHRAAC). Residues 19–4050 (EKPLEETITP…IKRGDWGQQE (4032 aa)) lie on the Extracellular side of the membrane. Cadherin domains lie at 34–148 (THSL…KPLF) and 149–256 (SPPS…PPVI). Asparagine 39, asparagine 210, asparagine 280, and asparagine 330 each carry an N-linked (GlcNAc...) asparagine glycan. 31 Cadherin domains span residues 363–458 (EKAV…APVF), 459–564 (NRSS…QPMF), 565–669 (EEVN…VPVQ), 716–820 (DHFP…PPRF), 821–925 (PPGG…PPQC), 926–1032 (ITEH…SPHF), 1033–1142 (SSFV…RPVF), 1138–1242 (SRPV…SPMF), 1243–1346 (SHKL…SSIP), 1350–1448 (DESH…RPQF), 1449–1555 (LQDH…SPHF), 1556–1660 (TQPR…APIF), 1661–1758 (SKDE…APAF), 1759–1872 (LKST…PPRF), 1873–1968 (SEQI…SLQF), 1969–2070 (DQDI…IPEF), 2071–2171 (QHLP…NPLF), 2172–2272 (QSPY…PPTF), 2273–2379 (SQLV…PPEF), 2380–2481 (REPQ…SPEF), 2482–2585 (QQNV…APQF), 2586–2692 (KASG…LPKF), 2693–2799 (SEPL…RPVF), 2800–2908 (EADP…PPRF), 2909–3013 (ASED…SPQC), 3014–3115 (SQLL…APRF), 3116–3220 (FPSH…LPIF), 3221–3323 (LNSE…HPRF), 3324–3428 (THDL…PPRF), 3429–3533 (FQLN…PPST), and 3534–3631 (LPLE…APQQ). N-linked (GlcNAc...) asparagine glycosylation is found at asparagine 459, asparagine 568, asparagine 627, and asparagine 789. N-linked (GlcNAc...) asparagine glycosylation occurs at asparagine 996. 3 N-linked (GlcNAc...) asparagine glycosylation sites follow: asparagine 1175, asparagine 1276, and asparagine 1417. N-linked (GlcNAc...) asparagine glycosylation is found at asparagine 1899, asparagine 1998, asparagine 2007, asparagine 2102, asparagine 2165, asparagine 2183, asparagine 2325, asparagine 2368, asparagine 2387, asparagine 2430, asparagine 2470, asparagine 2547, and asparagine 2597. Residues asparagine 3127, asparagine 3278, and asparagine 3312 are each glycosylated (N-linked (GlcNAc...) asparagine). N-linked (GlcNAc...) asparagine glycosylation is found at asparagine 3432, asparagine 3603, asparagine 3770, asparagine 3774, asparagine 3815, asparagine 3842, asparagine 3875, and asparagine 3906. Residues 3775–3946 (GTTWRFSGQS…YLETWALSQC (172 aa)) enclose the Laminin G-like domain. 4 disulfides stabilise this stretch: cysteine 3914-cysteine 3946, cysteine 3953-cysteine 3964, cysteine 3958-cysteine 3974, and cysteine 3976-cysteine 3985. EGF-like domains follow at residues 3949–3986 (PGTT…RNCE) and 3988–4024 (GREN…DRCE). Residue asparagine 3991 is glycosylated (N-linked (GlcNAc...) asparagine). 3 disulfide bridges follow: cysteine 3992–cysteine 4003, cysteine 3997–cysteine 4012, and cysteine 4014–cysteine 4023. The helical transmembrane segment at 4051 to 4071 (FLVIIVALPLLIIATVGLLLY) threads the bilayer. Over 4072–4351 (CRRCKSHKPV…DYGSCEEVMF (280 aa)) the chain is Cytoplasmic. Positions 4313–4340 (DCEVNGGPAPGRSQPRAPPNYEGSDMVE) are disordered.

In terms of assembly, homodimer.

Its subcellular location is the cell membrane. The protein localises to the cell junction. The protein resides in the golgi apparatus. It localises to the trans-Golgi network. In terms of biological role, involved in the regulation of cell migration. May be involved in mediating the organization of the parallel fibers of granule cells during cerebellar development. The sequence is that of Protocadherin Fat 2 (Fat2) from Mus musculus (Mouse).